The chain runs to 393 residues: Uroporphyrinogen decarboxylase, chloroplastic (393 aa).

The segment at 1–64 (MATACPPLSL…AGERNQREEV (64 aa)) is disordered. Positions 23-37 (AGPNAGSSRPSAAAP) are enriched in low complexity. Over residues 38–50 (SERRSWRRPRPDG) the composition is skewed to basic and acidic residues. Substrate contacts are provided by residues 73–77 (RQAGR), Phe92, Ser122, Asp123, Tyr200, Ser255, and His370.

It belongs to the uroporphyrinogen decarboxylase family. As to quaternary structure, homodimer.

It localises to the plastid. The protein resides in the chloroplast. It catalyses the reaction uroporphyrinogen III + 4 H(+) = coproporphyrinogen III + 4 CO2. It functions in the pathway porphyrin-containing compound metabolism; protoporphyrin-IX biosynthesis; coproporphyrinogen-III from 5-aminolevulinate: step 4/4. In terms of biological role, catalyzes the decarboxylation of four acetate groups of uroporphyrinogen-III to yield coproporphyrinogen-III. This Zea mays (Maize) protein is Uroporphyrinogen decarboxylase, chloroplastic (LES22).